We begin with the raw amino-acid sequence, 79 residues long: Putative Fis-like DNA-binding protein (79 aa).

Residues 55-74 (QSKASVMLGLNRNTLRKKLI) constitute a DNA-binding region (H-T-H motif).

It belongs to the transcriptional regulatory Fis family.

The protein is Putative Fis-like DNA-binding protein of Neisseria meningitidis serogroup A / serotype 4A (strain DSM 15465 / Z2491).